A 962-amino-acid chain; its full sequence is Glycine dehydrogenase (decarboxylating) (962 aa).

Lys-709 is subject to N6-(pyridoxal phosphate)lysine.

The protein belongs to the GcvP family. The glycine cleavage system is composed of four proteins: P, T, L and H. The cofactor is pyridoxal 5'-phosphate.

The catalysed reaction is N(6)-[(R)-lipoyl]-L-lysyl-[glycine-cleavage complex H protein] + glycine + H(+) = N(6)-[(R)-S(8)-aminomethyldihydrolipoyl]-L-lysyl-[glycine-cleavage complex H protein] + CO2. In terms of biological role, the glycine cleavage system catalyzes the degradation of glycine. The P protein binds the alpha-amino group of glycine through its pyridoxal phosphate cofactor; CO(2) is released and the remaining methylamine moiety is then transferred to the lipoamide cofactor of the H protein. The sequence is that of Glycine dehydrogenase (decarboxylating) from Shewanella sp. (strain MR-7).